The primary structure comprises 433 residues: Pyrimidine-nucleoside phosphorylase (433 aa).

81–83 is a phosphate binding site; the sequence is KHS. Residues glycine 88 and threonine 90 each contribute to the K(+) site. Residues threonine 92, 108 to 110, and threonine 120 each bind phosphate; that span reads KMS. Residues arginine 168 and lysine 187 each contribute to the substrate site. Positions 243, 246, and 255 each coordinate K(+).

The protein belongs to the thymidine/pyrimidine-nucleoside phosphorylase family. Homodimer. Requires K(+) as cofactor.

It catalyses the reaction uridine + phosphate = alpha-D-ribose 1-phosphate + uracil. The catalysed reaction is thymidine + phosphate = 2-deoxy-alpha-D-ribose 1-phosphate + thymine. The enzyme catalyses 2'-deoxyuridine + phosphate = 2-deoxy-alpha-D-ribose 1-phosphate + uracil. Its function is as follows. Catalyzes phosphorolysis of the pyrimidine nucleosides uridine, thymidine and 2'-deoxyuridine with the formation of the corresponding pyrimidine base and ribose-1-phosphate. This is Pyrimidine-nucleoside phosphorylase (pdp) from Staphylococcus aureus (strain NCTC 8325 / PS 47).